The sequence spans 348 residues: Calcium-gated potassium channel TvoK (348 aa).

3 helical membrane-spanning segments follow: residues 19 to 39 (LTKV…LEFL), 52 to 72 (YFTA…GDVV), and 80 to 100 (VVAM…TATI). An RCK N-terminal domain is found at 120 to 246 (KNHTIICNWN…VSAGATEVLS (127 aa)). The 83-residue stretch at 266 to 348 (DFILKSLSET…KKEVEEAIKG (83 aa)) folds into the RCK C-terminal domain.

In terms of assembly, heterooctamer composed of four full-length subunits and four soluble RCK domains.

Its subcellular location is the cell membrane. Functionally, calcium-gated potassium channel. Can also be activated by Mg(2+), Mn(2+) and Ni(2+). The polypeptide is Calcium-gated potassium channel TvoK (Thermoplasma volcanium (strain ATCC 51530 / DSM 4299 / JCM 9571 / NBRC 15438 / GSS1)).